The following is a 502-amino-acid chain: Chromosomal replication initiator protein DnaA (502 aa).

Positions 1 to 112 are domain I, interacts with DnaA modulators; the sequence is MADDLSLGFT…PSTDHIDDNS (112 aa). Residues 113-161 are domain II; that stretch reads SSADVLLTDDCGTDTDENYGEPLTGEYQGLPTYFTERPHHTESTVTGGT. A domain III, AAA+ region region spans residues 162-378; the sequence is SLNRRYTFET…GALIRVTAFA (217 aa). ATP is bound by residues Gly-206, Gly-208, Lys-209, and Thr-210. The domain IV, binds dsDNA stretch occupies residues 379-502; that stretch reads SLNKTAIDKA…TTRIRQRSKR (124 aa).

Belongs to the DnaA family. In terms of assembly, oligomerizes as a right-handed, spiral filament on DNA at oriC.

It is found in the cytoplasm. In terms of biological role, plays an essential role in the initiation and regulation of chromosomal replication. ATP-DnaA binds to the origin of replication (oriC) to initiate formation of the DNA replication initiation complex once per cell cycle. Binds the DnaA box (a 9 base pair repeat at the origin) and separates the double-stranded (ds)DNA. Forms a right-handed helical filament on oriC DNA; dsDNA binds to the exterior of the filament while single-stranded (ss)DNA is stabiized in the filament's interior. The ATP-DnaA-oriC complex binds and stabilizes one strand of the AT-rich DNA unwinding element (DUE), permitting loading of DNA polymerase. After initiation quickly degrades to an ADP-DnaA complex that is not apt for DNA replication. Binds acidic phospholipids. The chain is Chromosomal replication initiator protein DnaA from Mycobacterium leprae (strain TN).